We begin with the raw amino-acid sequence, 48 residues long: Fimbrial assembly protein, serogroup F1 (48 aa).

This chain is Fimbrial assembly protein, serogroup F1 (fimB), found in Dichelobacter nodosus (Bacteroides nodosus).